We begin with the raw amino-acid sequence, 551 residues long: Seed biotin-containing protein SBP65 (551 aa).

A compositionally biased stretch (basic and acidic residues) spans 1 to 20 (MASEQLSRRENITTERKIQN). The tract at residues 1–29 (MASEQLSRRENITTERKIQNAEDSVPQRT) is disordered. Lys-103 is modified (N6-biotinyllysine; atypical). A coiled-coil region spans residues 141-211 (KGQVVEERER…RNTTQAAQEK (71 aa)). 2 disordered regions span residues 197-265 (TNET…YEAT) and 518-551 (DEVE…NNVS). Low complexity predominate over residues 206 to 219 (QAAQEKGEAAQAKD). Polar residues-rich tracts occupy residues 223 to 242 (EKTQ…SART) and 250 to 265 (AKNT…YEAT). Basic and acidic residues predominate over residues 533–544 (HSLDRAKHEGYR).

It belongs to the seed biotin-containing protein SBP65 family. As to expression, expressed in dry mature seeds.

Functionally, may serve as a biotin source for several growth-limiting enzymes that are necessary during seed development and the subsequent germination stages, and thus may play some roles in determining seed germination capacity. In Pisum sativum (Garden pea), this protein is Seed biotin-containing protein SBP65 (SBP65).